A 399-amino-acid chain; its full sequence is CLOCK-interacting pacemaker (399 aa).

Basic and acidic residues predominate over residues 1 to 12; the sequence is MERKNSSRESPR. Disordered regions lie at residues 1–85 and 159–224; these read MERK…AKNA and SYTK…KLAE. Ser-213 carries the phosphoserine modification. Residues 333 to 359 adopt a coiled-coil conformation; the sequence is TLKTKELIRQNQATQVELDQLKEQTQL. Residues 378–388 show a composition bias toward polar residues; the sequence is SLTPGSSNTGS. The segment at 378 to 399 is disordered; sequence SLTPGSSNTGSDLEAFSDHPDI.

Interacts with CLOCK. Forms a ternary complex with the CLOCK-BMAL1 heterodimer. Interacts with CAD and HSPA5.

It localises to the nucleus. Its subcellular location is the cytoplasm. The protein resides in the cytosol. In terms of biological role, transcriptional repressor which may act as a negative-feedback regulator of CLOCK-BMAL1 transcriptional activity in the circadian-clock mechanism. May stimulate BMAL1-dependent phosphorylation of CLOCK. However, the physiological relevance of these observations is unsure, since experiments in knockout mice showed that CIPC is not critially required for basic circadian clock. This Pongo abelii (Sumatran orangutan) protein is CLOCK-interacting pacemaker (CIPC).